The primary structure comprises 29 residues: Vodo peptide N (29 aa).

The segment at residues 1 to 29 (GLPVCGETCTLGKCYTAGCSCSWPVCYRN) is a cross-link (cyclopeptide (Gly-Asn)). 3 disulfide bridges follow: Cys-5-Cys-19, Cys-9-Cys-21, and Cys-14-Cys-26.

In terms of processing, this is a cyclic peptide.

In terms of biological role, probably participates in a plant defense mechanism. This chain is Vodo peptide N, found in Viola odorata (Sweet violet).